The primary structure comprises 147 residues: Sec-independent protein translocase protein TatB (147 aa).

A helical membrane pass occupies residues 2-22 (FDGIGFMELLLIGVLGLVVLG). Polar residues predominate over residues 85–97 (QLKQAAQSVNRPY). The segment at 85–147 (QLKQAAQSVN…DTRSNPKANG (63 aa)) is disordered. Over residues 113 to 133 (ASQSVSTEASPSASSAPTSES) the composition is skewed to low complexity.

Belongs to the TatB family. The Tat system comprises two distinct complexes: a TatABC complex, containing multiple copies of TatA, TatB and TatC subunits, and a separate TatA complex, containing only TatA subunits. Substrates initially bind to the TatABC complex, which probably triggers association of the separate TatA complex to form the active translocon.

The protein localises to the cell inner membrane. Its function is as follows. Part of the twin-arginine translocation (Tat) system that transports large folded proteins containing a characteristic twin-arginine motif in their signal peptide across membranes. Together with TatC, TatB is part of a receptor directly interacting with Tat signal peptides. TatB may form an oligomeric binding site that transiently accommodates folded Tat precursor proteins before their translocation. This is Sec-independent protein translocase protein TatB from Shewanella sp. (strain ANA-3).